The sequence spans 282 residues: MDVEEKRVSSGYAKPPWIFKGSALYQIHLVKAATARAFIPKEFRLVEAFGYTLGGFFLASYDDSPAGVFDELVVIAGIVWNPPTSCAWAARVLVNSDEACHHGRKEVGLPSQVARFSKNITAVPKQKRDRAFGFLDTFGLGTTLSHPENLMEVKVSEVDSAASTDICNIQIRSDETKVGNWMGPAIKMALPSFSGNTIYNSNLLKYSCHLHCRVRPVRPAVVSGALEDETEKFTEQNHTSQESLENERQLSKAVMLSKPIIALQFKCLTMQVEAPVVIYPSK.

Its function is as follows. Required for neoxanthin biosynthesis. Probably not involved directly in the enzymatic conversion of violaxanthin to neoxanthin. Is necessary but not sufficient for neoxanthin synthesis. The polypeptide is Protein NEOXANTHIN-DEFICIENT 1 (Arabidopsis thaliana (Mouse-ear cress)).